Here is a 110-residue protein sequence, read N- to C-terminus: MADPWNRGHGAVDDMLDAENKRMAENLASKVSRLKSLAYDIDKDAEEQNAYLDGMDSNFLSATGLLTGSVKRFSTMVRSGRDNRKILCYVSVGLVVAFFLLYYLVSRMQN.

At 1–85 the chain is on the cytoplasmic side; sequence MADPWNRGHG…MVRSGRDNRK (85 aa). Residues 14–76 form the t-SNARE coiled-coil homology domain; sequence DMLDAENKRM…TGSVKRFSTM (63 aa). The helical; Anchor for type IV membrane protein transmembrane segment at 86–106 threads the bilayer; that stretch reads ILCYVSVGLVVAFFLLYYLVS. Over 107 to 110 the chain is Lumenal; sequence RMQN.

As to quaternary structure, component of a SNARE complex consisting of stx5, ykt6, gosr2 and bet1l.

Its subcellular location is the golgi apparatus membrane. In terms of biological role, vesicle SNARE required for targeting and fusion of retrograde transport vesicles with the Golgi complex. Required for the integrity of the Golgi complex. In Danio rerio (Zebrafish), this protein is BET1-like protein (bet1l).